The sequence spans 476 residues: ATP synthase subunit beta (476 aa).

154-161 (GGAGVGKT) serves as a coordination point for ATP.

It belongs to the ATPase alpha/beta chains family. In terms of assembly, F-type ATPases have 2 components, CF(1) - the catalytic core - and CF(0) - the membrane proton channel. CF(1) has five subunits: alpha(3), beta(3), gamma(1), delta(1), epsilon(1). CF(0) has four main subunits: a(1), b(1), b'(1) and c(9-12).

It is found in the cell inner membrane. The catalysed reaction is ATP + H2O + 4 H(+)(in) = ADP + phosphate + 5 H(+)(out). In terms of biological role, produces ATP from ADP in the presence of a proton gradient across the membrane. The catalytic sites are hosted primarily by the beta subunits. This Rhodopseudomonas palustris (strain BisB5) protein is ATP synthase subunit beta.